We begin with the raw amino-acid sequence, 513 residues long: MLDIKGYLVLFFLWFISTILIRSIFKKPQRLRLPPGPPISIPLLGHAPYLRSLLHQALYKLSLRYGPLIHVMIGSKHVVVASSAETAKQILKTSEEAFCNRPLMIASESLTYGAADYFFIPYGTYWRFLKKLCMTELLSGKTLEHFVRIRESEVEAFLKRMMEISGNGNYEVVMRKELITHTNNIITRMIMGKKSNAENDEVARLRKVVREVGELLGAFNLGDVIGFMRPLDLQGFGKKNMETHHKVDAMMEKVLREHEEARAKEDADSDRKKDLFDILLNLIEADGADNKLTRESAKAFALDMFIAGTNGPASVLEWSLAELVRNPHVFKKAREEIESVVGKERLVKESDIPNLPYLQAVLKETLRLHPPTPIFAREAMRTCQVEGYDIPENSTILISTWAIGRDPNYWDDALEYKPERFLFSDDPGKSKIDVRGQYYQLLPFGSGRRSCPGASLALLVMQATLASLIQCFDWIVNDGKNHHVDMSEEGRVTVFLAKPLKCKPVPRFTPFAA.

A helical; Signal-anchor membrane pass occupies residues Met-1–Ile-21. Cys-451 lines the heme pocket.

This sequence belongs to the cytochrome P450 family. Heme serves as cofactor.

The protein localises to the membrane. The catalysed reaction is beta-amyrin + reduced [NADPH--hemoprotein reductase] + O2 = 24-hydroxy-beta-amyrin + oxidized [NADPH--hemoprotein reductase] + H2O + H(+). It carries out the reaction sophoradiol + reduced [NADPH--hemoprotein reductase] + O2 = soyasapogenol B + oxidized [NADPH--hemoprotein reductase] + H2O + H(+). Heme-containing cytochrome P450 involved in the biosynthesis of soyasaponins. Hydroxylates specifically the C-24 methyl group of the triterpenes beta-amyrin and sophoradiol. No activity with lupeol, butyrospermol, tirucalla-7,21-dien-3beta-ol, taraxasterol, psi-taraxasterol, bauerenol, alpha-amyrin and multiflorenol as substrates. This Glycine max (Soybean) protein is Beta-amyrin 24-hydroxylase (CYP93E1).